The chain runs to 116 residues: Large ribosomal subunit protein bL20 (116 aa).

Belongs to the bacterial ribosomal protein bL20 family.

In terms of biological role, binds directly to 23S ribosomal RNA and is necessary for the in vitro assembly process of the 50S ribosomal subunit. It is not involved in the protein synthesizing functions of that subunit. The protein is Large ribosomal subunit protein bL20 of Mycoplasmopsis pulmonis (strain UAB CTIP) (Mycoplasma pulmonis).